Consider the following 722-residue polypeptide: Solute carrier organic anion transporter family member 4A1 (722 aa).

The disordered stretch occupies residues 1–52; the sequence is MPLHQLGDKPLTFPSPNSAMENGLDHTPPSRRASPGTPLSPGSLRSAAHSPL. Residues 1–103 lie on the Cytoplasmic side of the membrane; that stretch reads MPLHQLGDKP…PCLQVLNTPK (103 aa). Residue S34 is modified to Phosphoserine. At T37 the chain carries Phosphothreonine. S40, S43, S46, and S50 each carry phosphoserine. The helical transmembrane segment at 104–124 threads the bilayer; the sequence is GILFFLCAAAFLQGMTVNGFI. The Extracellular portion of the chain corresponds to 125-143; sequence NTVITSLERRYDLHSYQSG. A helical membrane pass occupies residues 144–164; the sequence is LIASSYDIAACLCLTFVSYFG. At 165-170 the chain is on the cytoplasmic side; the sequence is GSGHKP. A helical transmembrane segment spans residues 171 to 195; it reads RWLGWGVLLMGTGSLVFALPHFTAG. Residues 196–222 lie on the Extracellular side of the membrane; sequence RYEVELDAGVRTCPANPGAVCADSTSG. The chain crosses the membrane as a helical span at residues 223–253; the sequence is LSRYQLVFMLGQFLHGVGATPLYTLGVTYLD. The Cytoplasmic segment spans residues 254-272; it reads ENVKSSCSPVYIAIFYTAA. A helical transmembrane segment spans residues 273-293; it reads ILGPAAGYLIGGALLNIYTEM. Over 294–307 the chain is Extracellular; that stretch reads GRRTELTTESPLWV. Residues 308-332 form a helical membrane-spanning segment; it reads GAWWVGFLGSGAAAFFTAVPILGYP. At 333-378 the chain is on the cytoplasmic side; sequence RQLPGSQRYAVMRAAEMHQLKDSSRGEASNPDFGKTIRDLPLSIWL. A helical membrane pass occupies residues 379 to 400; sequence LLKNPTFILLCLAGATEATLIT. Residues 401–420 are Extracellular-facing; sequence GMSTFSPKFLESQFSLSASE. The helical transmembrane segment at 421 to 444 threads the bilayer; it reads AATLFGYLVVPAGGGGTFLGGFFV. At 445-448 the chain is on the cytoplasmic side; sequence NKLR. A helical membrane pass occupies residues 449 to 471; it reads LRGSAVIKFCLFCTVVSLLGILV. Topologically, residues 472–580 are extracellular; the sequence is FSLHCPSVPM…TSTCQRKPLL (109 aa). The Kazal-like domain maps to 498–555; that stretch reads LNLTAPCNAACSCQPEHYSPVCGSDGLMYFSLCHAGCPAATETNVDGQKVYRDCSCIP. The N-linked (GlcNAc...) asparagine glycan is linked to N499. 3 disulfides stabilise this stretch: C504–C534, C510–C530, and C519–C553. A glycan (N-linked (GlcNAc...) asparagine) is linked at N557. Residues 581 to 603 traverse the membrane as a helical segment; it reads LVFIFVVIFFTFLSSIPALTATL. The Cytoplasmic segment spans residues 604–612; that stretch reads RCVRDPQRS. Residues 613 to 638 traverse the membrane as a helical segment; that stretch reads FALGIQWIVVRILGGIPGPIAFGWVI. Topologically, residues 639 to 671 are extracellular; that stretch reads DKACLLWQDQCGQQGSCLVYQNSAMSRYILIMG. A helical transmembrane segment spans residues 672–689; sequence LLYKVLGVLFFAIACFLY. At 690–722 the chain is on the cytoplasmic side; sequence KPLSESSDGLETCLPSQSSAPDSATDSQLQSSV. The segment at 703–722 is disordered; the sequence is LPSQSSAPDSATDSQLQSSV.

This sequence belongs to the organo anion transporter (TC 2.A.60) family. In terms of tissue distribution, widely expressed. Expressed in placental trophoblasts. Expressed in pancreas, kidney, skeletal muscle, liver, lung, brain, heart, colon, small intestine, ovary, testis, prostate, thymus and spleen. In testis, primarily localized to Leydig cells.

It localises to the cell membrane. The catalysed reaction is 3,3',5-triiodo-L-thyronine(out) + L-glutamate(in) = 3,3',5-triiodo-L-thyronine(in) + L-glutamate(out). It carries out the reaction L-thyroxine(out) + L-glutamate(in) = L-thyroxine(in) + L-glutamate(out). It catalyses the reaction estrone 3-sulfate(out) + L-glutamate(in) = estrone 3-sulfate(in) + L-glutamate(out). The enzyme catalyses taurocholate(out) + L-glutamate(in) = taurocholate(in) + L-glutamate(out). The catalysed reaction is 3,3',5-triiodo-L-thyronine(out) = 3,3',5-triiodo-L-thyronine(in). It carries out the reaction L-thyroxine(out) = L-thyroxine(in). It catalyses the reaction 3,3',5'-triiodo-L-thyronine(out) = 3,3',5'-triiodo-L-thyronine(in). The enzyme catalyses estrone 3-sulfate(out) = estrone 3-sulfate(in). The catalysed reaction is 17beta-estradiol 17-O-(beta-D-glucuronate)(out) = 17beta-estradiol 17-O-(beta-D-glucuronate)(in). It carries out the reaction taurocholate(out) = taurocholate(in). It catalyses the reaction prostaglandin E2(out) = prostaglandin E2(in). Organic anion antiporter with apparent broad substrate specificity. Recognizes various substrates including thyroid hormones 3,3',5-triiodo-L-thyronine (T3), L-thyroxine (T4) and 3,3',5'-triiodo-L-thyronine (rT3), conjugated steroids such as estrone 3-sulfate and estradiol 17-beta glucuronide, bile acids such as taurocholate and prostanoids such as prostaglandin E2, likely operating in a tissue-specific manner. May be involved in uptake of metabolites from the circulation into organs such as kidney, liver or placenta. Possibly drives the selective transport of thyroid hormones and estrogens coupled to an outward glutamate gradient across the microvillous membrane of the placenta. The transport mechanism, its electrogenicity and potential tissue-specific counterions remain to be elucidated. This is Solute carrier organic anion transporter family member 4A1 (SLCO4A1) from Homo sapiens (Human).